The sequence spans 124 residues: Small ribosomal subunit protein uS12 (124 aa).

Residue Asp-90 is modified to 3-methylthioaspartic acid.

The protein belongs to the universal ribosomal protein uS12 family. As to quaternary structure, part of the 30S ribosomal subunit. Contacts proteins S8 and S17. May interact with IF1 in the 30S initiation complex.

In terms of biological role, with S4 and S5 plays an important role in translational accuracy. Functionally, interacts with and stabilizes bases of the 16S rRNA that are involved in tRNA selection in the A site and with the mRNA backbone. Located at the interface of the 30S and 50S subunits, it traverses the body of the 30S subunit contacting proteins on the other side and probably holding the rRNA structure together. The combined cluster of proteins S8, S12 and S17 appears to hold together the shoulder and platform of the 30S subunit. This is Small ribosomal subunit protein uS12 from Wolbachia sp. subsp. Drosophila simulans (strain wRi).